The primary structure comprises 80 residues: U-actitoxin-Avd9b (80 aa).

Positions 1 to 20 (MNLKVLAVFVLCAILVVVTA) are cleaved as a signal peptide. Positions 21–39 (ERRGTETGGYKKDTLQDLK) are excised as a propeptide. Positions 45 to 80 (CFDRYREAACTSDNIRLLCKTSAKYQINCKKSCGLC) constitute a ShKT domain. 3 disulfide bridges follow: cysteine 45–cysteine 80, cysteine 54–cysteine 73, and cysteine 63–cysteine 77. A crucial for binding to potassium channels region spans residues 68–69 (KY).

The protein belongs to the sea anemone type 1 potassium channel toxin family. Type 1b subfamily.

It localises to the secreted. The protein resides in the nematocyst. Inhibits voltage-gated potassium channels (Kv1/KCNA). This chain is U-actitoxin-Avd9b, found in Anemonia viridis (Snakelocks anemone).